Reading from the N-terminus, the 307-residue chain is Oxygen-dependent coproporphyrinogen-III oxidase (307 aa).

Ser-94 lines the substrate pocket. His-98 and His-108 together coordinate a divalent metal cation. Catalysis depends on His-108, which acts as the Proton donor. 110–112 is a substrate binding site; sequence NVR. A divalent metal cation is bound by residues His-147 and His-177. An important for dimerization region spans residues 242–277; that stretch reads YVEFNLVWDRGTLFGLQSGGRTESILMSMPPLAQWQ. 260–262 contacts substrate; sequence GGR.

The protein belongs to the aerobic coproporphyrinogen-III oxidase family. As to quaternary structure, homodimer. A divalent metal cation serves as cofactor.

The protein localises to the cytoplasm. The enzyme catalyses coproporphyrinogen III + O2 + 2 H(+) = protoporphyrinogen IX + 2 CO2 + 2 H2O. It functions in the pathway porphyrin-containing compound metabolism; protoporphyrin-IX biosynthesis; protoporphyrinogen-IX from coproporphyrinogen-III (O2 route): step 1/1. In terms of biological role, involved in the heme biosynthesis. Catalyzes the aerobic oxidative decarboxylation of propionate groups of rings A and B of coproporphyrinogen-III to yield the vinyl groups in protoporphyrinogen-IX. The protein is Oxygen-dependent coproporphyrinogen-III oxidase of Chromohalobacter salexigens (strain ATCC BAA-138 / DSM 3043 / CIP 106854 / NCIMB 13768 / 1H11).